The sequence spans 130 residues: Glycine cleavage system H protein (130 aa).

Residues 25 to 106 form the Lipoyl-binding domain; the sequence is VALIGITDFA…PFDTWMVKLK (82 aa). Lys-66 carries the N6-lipoyllysine modification.

The protein belongs to the GcvH family. The glycine cleavage system is composed of four proteins: P, T, L and H. The cofactor is (R)-lipoate.

Functionally, the glycine cleavage system catalyzes the degradation of glycine. The H protein shuttles the methylamine group of glycine from the P protein to the T protein. This Leptospira biflexa serovar Patoc (strain Patoc 1 / Ames) protein is Glycine cleavage system H protein.